The primary structure comprises 498 residues: Heat stress transcription factor A-3 (498 aa).

The tract at residues 156-180 is disordered; the sequence is RRRSSPTQQSGLQPGSSGESGLDPE. The span at 160 to 174 shows a compositional bias: polar residues; that stretch reads SPTQQSGLQPGSSGE. The stretch at 180–235 forms a coiled coil; sequence ELNTLRREKSALLQEVTRLKQEHLQTIEQMSTLNQRLESAEDRQKQMVSFLAKLLQ. The segment at 184–234 is hydrophobic repeat HR-A/B; sequence LRREKSALLQEVTRLKQEHLQTIEQMSTLNQRLESAEDRQKQMVSFLAKLL. A Nuclear localization signal motif is present at residues 258–263; it reads KRKFLK. The tract at residues 263–291 is disordered; the sequence is KHVPHGNIDSGESSSQHTGESNLDFSPTS. The segment covering 272–291 has biased composition (polar residues); sequence SGESSSQHTGESNLDFSPTS. The Nuclear export signal signature appears at 309 to 316; the sequence is LEDGDLNL. Residues 356-382 are disordered; sequence LEIPPASGPRGQDPTIGRSKGKNVLSP.

This sequence belongs to the HSF family. Class A subfamily. As to quaternary structure, homotrimer. Exhibits temperature-dependent phosphorylation.

The protein resides in the cytoplasm. It is found in the nucleus. In terms of biological role, transcriptional regulator that specifically binds DNA of heat shock promoter elements (HSE). The protein is Heat stress transcription factor A-3 (HSFA3) of Oryza sativa subsp. japonica (Rice).